The chain runs to 305 residues: Transcription factor bHLH18 (305 aa).

The tract at residues 41–67 (LKTTHISPNLHPFSSSNPPPPKHQPSS) is disordered. Polar residues predominate over residues 44–56 (THISPNLHPFSSS). Residues 122–171 (SNAQDHILAERKRREKLTQRFVALSALIPGLKKMDKASVLGDAIKHIKYL) enclose the bHLH domain. The interval 201–224 (DENHQPSSSSSSDGNRNSSSSNLP) is disordered. Residues 207–222 (SSSSSSDGNRNSSSSN) are compositionally biased toward low complexity.

In terms of assembly, homodimer. Expressed in roots.

The protein localises to the nucleus. This chain is Transcription factor bHLH18 (BHLH18), found in Arabidopsis thaliana (Mouse-ear cress).